Consider the following 270-residue polypeptide: MPELPEVEVSRLGISPHIEGRTIKSVKVHDKRLRWPVPETVHKVEGHVLRSVSRRSKYLLLQTDNGCLILHLGMSGKLRVVPAETTHYKHDHIDIEFDNGQTLRLNDPRRFGALLYSESDVSGHELLSQLGPEPLTDAFNIDYLFERSRGRSQSVKTFLMDNKVVVGVGNIYANEALFKAGINPKRAAGKISKVRYQKLVPIIKETLASAIELGGTTLKDFTQVDGNPGYFAQKLQVYGRGGKLCMVCSNRLKEVRLGQRSTVYCTQCQR.

Catalysis depends on Pro2, which acts as the Schiff-base intermediate with DNA. Glu3 (proton donor) is an active-site residue. Lys57 serves as the catalytic Proton donor; for beta-elimination activity. Positions 90, 109, and 151 each coordinate DNA. The segment at 236–270 adopts an FPG-type zinc-finger fold; that stretch reads QVYGRGGKLCMVCSNRLKEVRLGQRSTVYCTQCQR. Arg260 serves as the catalytic Proton donor; for delta-elimination activity.

Belongs to the FPG family. In terms of assembly, monomer. Zn(2+) serves as cofactor.

The catalysed reaction is Hydrolysis of DNA containing ring-opened 7-methylguanine residues, releasing 2,6-diamino-4-hydroxy-5-(N-methyl)formamidopyrimidine.. The enzyme catalyses 2'-deoxyribonucleotide-(2'-deoxyribose 5'-phosphate)-2'-deoxyribonucleotide-DNA = a 3'-end 2'-deoxyribonucleotide-(2,3-dehydro-2,3-deoxyribose 5'-phosphate)-DNA + a 5'-end 5'-phospho-2'-deoxyribonucleoside-DNA + H(+). Involved in base excision repair of DNA damaged by oxidation or by mutagenic agents. Acts as a DNA glycosylase that recognizes and removes damaged bases. Has a preference for oxidized purines, such as 7,8-dihydro-8-oxoguanine (8-oxoG). Has AP (apurinic/apyrimidinic) lyase activity and introduces nicks in the DNA strand. Cleaves the DNA backbone by beta-delta elimination to generate a single-strand break at the site of the removed base with both 3'- and 5'-phosphates. This chain is Formamidopyrimidine-DNA glycosylase, found in Idiomarina loihiensis (strain ATCC BAA-735 / DSM 15497 / L2-TR).